Consider the following 698-residue polypeptide: Serotransferrin (698 aa).

Positions 1–19 (MRFAVGALLACAALGLCLA) are cleaved as a signal peptide. Transferrin-like domains lie at 25-347 (VKWC…NQRE) and 360-683 (VKWC…NIRK). 2 disulfide bridges follow: C28–C67 and C38–C58. Dimethylated arginine is present on R42. Fe(3+) is bound by residues D82 and Y114. Disulfide bonds link C137–C213, C156–C350, C177–C193, C180–C196, C190–C198, C246–C260, C363–C395, and C373–C386. T139, R143, A145, and G146 together coordinate hydrogencarbonate. Residue Y207 participates in Fe(3+) binding. A Fe(3+)-binding site is contributed by H268. S388 is subject to Phosphoserine. 2 residues coordinate Fe(3+): D410 and Y447. Cystine bridges form between C420–C693, C435–C656, C471–C542, C495–C684, C505–C519, C516–C525, C582–C596, and C634–C639. Hydrogencarbonate-binding residues include T473, R477, A479, and G480. N512 is a glycosylation site (N-linked (GlcNAc...) asparagine). Y536 lines the Fe(3+) pocket. H604 provides a ligand contact to Fe(3+). The residue at position 685 (S685) is a Phosphoserine.

Belongs to the transferrin family. As to quaternary structure, monomer. Part of a complex composed of SLC40A1/ferroportin, TF/transferrin and HEPH/hephaestin that transfers iron from cells to transferrin. Expressed by the liver and secreted in plasma.

Its subcellular location is the secreted. Transferrins are iron binding transport proteins which can bind two Fe(3+) ions in association with the binding of an anion, usually bicarbonate. It is responsible for the transport of iron from sites of absorption and heme degradation to those of storage and utilization. Serum transferrin may also have a further role in stimulating cell proliferation. In Rattus norvegicus (Rat), this protein is Serotransferrin (Tf).